The following is a 423-amino-acid chain: Serine hydroxymethyltransferase (423 aa).

(6S)-5,6,7,8-tetrahydrofolate contacts are provided by residues Leu120 and Gly124–Leu126. At Lys229 the chain carries N6-(pyridoxal phosphate)lysine. (6S)-5,6,7,8-tetrahydrofolate is bound at residue Ser353–Phe355.

Belongs to the SHMT family. In terms of assembly, homodimer. Pyridoxal 5'-phosphate is required as a cofactor.

The protein localises to the cytoplasm. The enzyme catalyses (6R)-5,10-methylene-5,6,7,8-tetrahydrofolate + glycine + H2O = (6S)-5,6,7,8-tetrahydrofolate + L-serine. It functions in the pathway one-carbon metabolism; tetrahydrofolate interconversion. Its pathway is amino-acid biosynthesis; glycine biosynthesis; glycine from L-serine: step 1/1. Its function is as follows. Catalyzes the reversible interconversion of serine and glycine with tetrahydrofolate (THF) serving as the one-carbon carrier. This reaction serves as the major source of one-carbon groups required for the biosynthesis of purines, thymidylate, methionine, and other important biomolecules. Also exhibits THF-independent aldolase activity toward beta-hydroxyamino acids, producing glycine and aldehydes, via a retro-aldol mechanism. This chain is Serine hydroxymethyltransferase, found in Prochlorococcus marinus subsp. pastoris (strain CCMP1986 / NIES-2087 / MED4).